The chain runs to 570 residues: Probable D-xylulose kinase A (570 aa).

Residues H98, D279, and N280 each coordinate substrate. Residues W363, 470-471 (GG), and N474 contribute to the ATP site.

The protein belongs to the FGGY kinase family.

It localises to the cytoplasm. The enzyme catalyses D-xylulose + ATP = D-xylulose 5-phosphate + ADP + H(+). In terms of biological role, highly specific D-xylulose kinase which participates in the catabolism of xylose. Xylose is a major component of hemicelluloses such as xylan. Most fungi utilize D-xylose via three enzymatic reactions, xylose reductase (XR), xylitol dehydrogenase (XDH), and xylulokinase, to form xylulose 5-phosphate, which enters pentose phosphate pathway. The chain is Probable D-xylulose kinase A (xkiA) from Arthroderma otae (strain ATCC MYA-4605 / CBS 113480) (Microsporum canis).